A 337-amino-acid polypeptide reads, in one-letter code: Protein ABHD13 (337 aa).

Residues 37-57 (FHLYGGIVLLLLIFVSIAGIL) form a helical; Signal-anchor for type II membrane protein membrane-spanning segment. Catalysis depends on charge relay system residues Ser193, Asp268, and His298. Asn299 carries an N-linked (GlcNAc...) asparagine glycan.

It belongs to the serine esterase family.

Its subcellular location is the membrane. In Mus musculus (Mouse), this protein is Protein ABHD13.